The sequence spans 263 residues: MTDNAPRIHPTAVIDPAARLADDVQVGAFTLIGADVEIGAGTVVGPHCSIHGPTRIGRDNRFVGHAAIGGEPQDKKFAGERTELVIGDRNVFREFVTVNRGTGGGGGITTIGNDNWMLAYTHVAHDCHVGNFCVFSNNTTLAGHVTVGDYVIISGFAGAHQFCRIGAHAFLGMGALTNGDVPPFTMVGTDSLGRPRGINSEGLKRRGFDAERISAIKRAYRTLYVAGLPLAEAKQQLTEQARGSDDVKAMLDFIEHAERPLLR.

The protein belongs to the transferase hexapeptide repeat family. LpxA subfamily. As to quaternary structure, homotrimer.

Its subcellular location is the cytoplasm. The enzyme catalyses a (3R)-hydroxyacyl-[ACP] + UDP-N-acetyl-alpha-D-glucosamine = a UDP-3-O-[(3R)-3-hydroxyacyl]-N-acetyl-alpha-D-glucosamine + holo-[ACP]. The protein operates within glycolipid biosynthesis; lipid IV(A) biosynthesis; lipid IV(A) from (3R)-3-hydroxytetradecanoyl-[acyl-carrier-protein] and UDP-N-acetyl-alpha-D-glucosamine: step 1/6. Functionally, involved in the biosynthesis of lipid A, a phosphorylated glycolipid that anchors the lipopolysaccharide to the outer membrane of the cell. In Stenotrophomonas maltophilia (strain R551-3), this protein is Acyl-[acyl-carrier-protein]--UDP-N-acetylglucosamine O-acyltransferase.